The primary structure comprises 460 residues: GTPase Der (460 aa).

2 consecutive EngA-type G domains span residues 2-166 (KTIA…AEER) and 175-353 (TRIA…QERK). GTP contacts are provided by residues 8–15 (GRPNVGKS), 55–59 (DTGGL), 118–121 (NKLD), 181–188 (GQPNAGKS), 228–232 (DTAGL), and 293–296 (NKID). The KH-like domain occupies 354 to 446 (KRIPTHRLTQ…LLWKWRKAEG (93 aa)).

The protein belongs to the TRAFAC class TrmE-Era-EngA-EngB-Septin-like GTPase superfamily. EngA (Der) GTPase family. In terms of assembly, associates with the 50S ribosomal subunit.

Its function is as follows. GTPase that plays an essential role in the late steps of ribosome biogenesis. This is GTPase Der from Methylacidiphilum infernorum (isolate V4) (Methylokorus infernorum (strain V4)).